Reading from the N-terminus, the 459-residue chain is MALINIKAPENIILKPHITVFGVGGAGSNAVNNMIGANLQGANFVVANTDAQSLEYSRCENKIQLGVSTTRGLGAGAAPEVGAAAAQESENEIRNYLENSNMVFITAGMGGGTGTGSAPVIARIAKELGILTVGVVTKPFHFEGGHRMKTADKGIIDLQQFVDTLIVIPNQNLFRIANEQTTFADAFKMADDVLHAGVRGVTDLMIMPGLINLDFADIKAVMSEMGKAMMGTGEASGEDRATKAAESAISNPLLDHSSMCGARGVLINITGGPDMTLFEVDNAANRIREEVNNKDANIIFGSTFNPELKGIIRVSVVATGIDADKIPLYKPVNSSATDLSIEEDEDTKLRAQSTQGDQPVHIEEIPNFNSYSNDEAEIADSLDQAPNSTNDDMEPRVSLTNDAGETPKSSFFVRMWGSLRTQNNNQIPERKNVVVGMPDEETKESDIHDIPAFLRKKRD.

GTP-binding positions include glycine 25–asparagine 29, glycine 112–glycine 114, glutamate 143, arginine 147, and aspartate 191. Disordered stretches follow at residues aspartate 383–glutamate 405 and isoleucine 427–aspartate 459.

This sequence belongs to the FtsZ family. Homodimer. Polymerizes to form a dynamic ring structure in a strictly GTP-dependent manner. Interacts directly with several other division proteins.

The protein resides in the cytoplasm. Functionally, essential cell division protein that forms a contractile ring structure (Z ring) at the future cell division site. The regulation of the ring assembly controls the timing and the location of cell division. One of the functions of the FtsZ ring is to recruit other cell division proteins to the septum to produce a new cell wall between the dividing cells. Binds GTP and shows GTPase activity. This Rickettsia bellii (strain RML369-C) protein is Cell division protein FtsZ.